The primary structure comprises 234 residues: MNYSLEDLPNSGKNPRVYMDIVLNNEIIGRLQIKLFRDAFPAGVENFVQLTNGKTYRVNSNGTGKYKYNRHINRTYEGCKFHNVLHNNYIVSGDIYNSNGSSAGTVYCDEPIPPVFGDYFYPHESKGLLSLVPYTDESGNRYYDSTFMITLDDIRPSNVLDELDRDQVVIGQVYGGLDVLDKINSMIKPYAGRKYPTFSIGKCGAYLDSSQAQRKRPVNVNGTKRFLNKPTRVN.

One can recognise a PPIase cyclophilin-type domain in the interval tyrosine 18–alanine 205.

It belongs to the cyclophilin-type PPIase family. As to quaternary structure, homotrimer.

Its subcellular location is the virion. It localises to the host cytoplasm. The sequence is that of Structural PPIase-like protein L605 from Acanthamoeba polyphaga mimivirus (APMV).